The primary structure comprises 589 residues: Ubiquilin-1 (589 aa).

Gly residues predominate over residues 1-11 (MAESGESGGPP). Disordered regions lie at residues 1 to 35 (MAES…AEPK) and 110 to 145 (NRPQ…ATSN). Ala2 is subject to N-acetylalanine. The segment covering 12 to 35 (GSQDSAAGAEGAGAPAAAASAEPK) has biased composition (low complexity). One can recognise a Ubiquitin-like domain in the interval 37–111 (MKVTVKTPKE…VHLVIKTQNR (75 aa)). Polar residues predominate over residues 110-124 (NRPQDHSAQQTNTAG). The span at 125–145 (SNVTTSSTPNSNSTSGSATSN) shows a compositional bias: low complexity. An interaction with UBXN4 region spans residues 178–428 (QLLSNPEMMV…LNNPLFAGNP (251 aa)). 2 consecutive STI1 domains span residues 182–210 (NPEM…QLIM) and 212–251 (NPQM…MQEM). The segment at 295 to 371 (PFASLVSNTS…NLVPGVGASM (77 aa)) is disordered. Polar residues predominate over residues 299 to 313 (LVSNTSSGEGSQPSR). Positions 327–360 (QTSQSSSASSGTASTVGGTTGSTASGTSGQSTTA) are enriched in low complexity. 2 STI1 domains span residues 387–434 (NPQL…QEQM) and 438–470 (LPTF…QQGL). Residues 488-520 (LGALGSTGGSSGTNGSNATPSENTSPTAGTTEP) form a disordered region. Gly residues predominate over residues 489–499 (GALGSTGGSSG). The segment covering 509–520 (ENTSPTAGTTEP) has biased composition (polar residues). Residues 546–586 (RFQQQLEQPSAMGFLNREANLQALIATGGDINAAIERLLGS) enclose the UBA domain.

Monomer and homodimer. Heterodimer with UBQLN2. Binds CD47, NBL1, GABRA1, GABRA2, GABRA3, GABRA6, GABRB1, GABRB2 and GABRB3. Binds UBE3A, BTRC, P4HB and MTOR. Interacts with the proteasome 19S subunit. Interacts (via ubiquitin-like domain) with TREX1; the interaction is direct and may control TREX1 subcellular location. Forms a complex with UBXN4 and VCP. Interacts (via UBA domain) with UBQLN4 (via ubiquitin-like domain). Found in a complex with UBQLN2 and MAP1LC3A/B/C. The monomeric form interacts with PSEN1 and PSEN2. Interacts with ORAI1. Interacts (via UBA domain) with TICAM1. Interacts with EPS15. Interacts (via UBA domain) with UBA52 and (via ubiquitin-like domain) with PSMD3 and PSMD4. Interacts with HERPUD1. Interacts with MAP1LC3A/B/C in the presence of UBQLN4. Interacts (via ubiquitin-like domain) with EPS15 (via UIM domains) and both the ubiquitinated and non-ubiquitinated forms can interact with EPS15. Interacts (via ubiquitin-like domain) with EPS15L1, HGS (via UIM domain) and STAM2 (via UIM domain). Interacts with BCL2L10/BCL-B; in the cytoplasm. In terms of processing, degraded during both macroautophagy and during chaperone-mediated autophagy (CMA). Phosphorylated. Post-translationally, ubiquitinated.

Its subcellular location is the nucleus. The protein resides in the cytoplasm. It is found in the endoplasmic reticulum. The protein localises to the cytoplasmic vesicle. It localises to the autophagosome. Its subcellular location is the cell membrane. Its function is as follows. Plays an important role in the regulation of different protein degradation mechanisms and pathways including ubiquitin-proteasome system (UPS), autophagy and endoplasmic reticulum-associated protein degradation (ERAD) pathway. Mediates the proteasomal targeting of misfolded or accumulated proteins for degradation by binding (via UBA domain) to their polyubiquitin chains and by interacting (via ubiquitin-like domain) with the subunits of the proteasome. Plays a role in the ERAD pathway via its interaction with ER-localized proteins UBXN4, VCP and HERPUD1 and may form a link between the polyubiquitinated ERAD substrates and the proteasome. Plays a role in unfolded protein response (UPR) by attenuating the induction of UPR-inducible genes, DDTI3/CHOP, HSPA5 and PDIA2 during ER stress. Involved in the regulation of macroautophagy and autophagosome formation; required for maturation of autophagy-related protein LC3 from the cytosolic form LC3-I to the membrane-bound form LC3-II and may assist in the maturation of autophagosomes to autolysosomes by mediating autophagosome-lysosome fusion. Negatively regulates the TICAM1/TRIF-dependent toll-like receptor signaling pathway by decreasing the abundance of TICAM1 via the autophagic pathway. Promotes the ubiquitination and lysosomal degradation of ORAI1, consequently down-regulating the ORAI1-mediated Ca2+ mobilization. Suppresses the maturation and proteasomal degradation of amyloid beta A4 protein (A4) by stimulating the lysine 63 (K63)-linked polyubiquitination. Delays the maturation of A4 by sequestering it in the Golgi apparatus and preventing its transport to the cell surface for subsequent processing. Ubiquitinates BCL2L10 and thereby stabilizes protein abundance. The sequence is that of Ubiquilin-1 (UBQLN1) from Pongo abelii (Sumatran orangutan).